Here is a 765-residue protein sequence, read N- to C-terminus: Membrane metallo-endopeptidase-like 1 (765 aa).

Residues 1–19 (MVERAGWCRKKSPGFVEYG) are Cytoplasmic-facing. Residues 20-40 (LMVLLLLLLGAIVTLGVFYSI) form a helical; Signal-anchor for type II membrane protein membrane-spanning segment. Residues 41 to 765 (GKQLPLLTSL…MHPMKRCRIW (725 aa)) are Lumenal-facing. Residues 74–765 (ICTTPSCVIA…MHPMKRCRIW (692 aa)) enclose the Peptidase M13 domain. Intrachain disulfides connect C75/C80, C98/C750, C106/C710, C161/C425, and C636/C762. R121 serves as a coordination point for a peptide. N163, N279, N303, and N336 each carry an N-linked (GlcNAc...) asparagine glycan. A coiled-coil region spans residues 523 to 549 (FENGLQNLKNNAQRSLKKLREKVDQNL). Residue H599 coordinates Zn(2+). E600 is a catalytic residue. H603 and E662 together coordinate Zn(2+). D666 serves as the catalytic Proton donor. Residue N694 is glycosylated (N-linked (GlcNAc...) asparagine).

Belongs to the peptidase M13 family. Zn(2+) is required as a cofactor. In terms of processing, N-glycosylated. In terms of tissue distribution, highly expressed in testis. Also expressed in ovary. Weakly or not expressed in brain, lung, heart, liver, kidney, adrenal gland and intestine.

Its subcellular location is the membrane. It localises to the secreted. It carries out the reaction Preferential cleavage of polypeptides between hydrophobic residues, particularly with Phe or Tyr at P1'.. Its activity is regulated as follows. Inhibited by thiorphan and phosphoramidon. In terms of biological role, metalloprotease involved in sperm function, possibly by modulating the processes of fertilization and early embryonic development. Degrades a broad variety of small peptides with a preference for peptides shorter than 3 kDa containing neutral bulky aliphatic or aromatic amino acid residues. Shares the same substrate specificity with MME and cleaves peptides at the same amide bond. In Mus musculus (Mouse), this protein is Membrane metallo-endopeptidase-like 1 (Mmel1).